Reading from the N-terminus, the 538-residue chain is Nicotinate phosphoribosyltransferase (538 aa).

The nicotinate site is built by Tyr21 and Thr210. His213 carries the phosphohistidine modification. Arg318 lines the nicotinate pocket. 5-phospho-alpha-D-ribose 1-diphosphate is bound at residue Thr380.

This sequence belongs to the NAPRTase family. Homodimer. Mg(2+) is required as a cofactor. The cofactor is Mn(2+). Post-translationally, transiently phosphorylated on a His residue during the reaction cycle. Phosphorylation strongly increases the affinity for substrates and increases the rate of nicotinate D-ribonucleotide production. Dephosphorylation regenerates the low-affinity form of the enzyme, leading to product release. Abundantly expressed in the small intestine, liver and kidney.

It localises to the cytoplasm. The protein resides in the cytosol. The enzyme catalyses nicotinate + 5-phospho-alpha-D-ribose 1-diphosphate + ATP + H2O = nicotinate beta-D-ribonucleotide + ADP + phosphate + diphosphate. Its pathway is cofactor biosynthesis; NAD(+) biosynthesis; nicotinate D-ribonucleotide from nicotinate: step 1/1. Its function is as follows. Catalyzes the first step in the biosynthesis of NAD from nicotinic acid, the ATP-dependent synthesis of beta-nicotinate D-ribonucleotide from nicotinate and 5-phospho-D-ribose 1-phosphate. Helps prevent cellular oxidative stress via its role in NAD biosynthesis. This Mus musculus (Mouse) protein is Nicotinate phosphoribosyltransferase (Naprt).